The chain runs to 92 residues: uncharacterized protein (92 aa).

This is an uncharacterized protein from Pseudoalteromonas phage PM2 (Bacteriophage PM2).